We begin with the raw amino-acid sequence, 368 residues long: Agmatine deiminase (368 aa).

The active-site Amidino-cysteine intermediate is C357.

It belongs to the agmatine deiminase family. In terms of assembly, homodimer.

It carries out the reaction agmatine + H2O = N-carbamoylputrescine + NH4(+). The protein operates within amine and polyamine biosynthesis; putrescine biosynthesis via agmatine pathway; N-carbamoylputrescine from agmatine: step 1/1. Functionally, mediates the hydrolysis of agmatine into N-carbamoylputrescine in the arginine decarboxylase (ADC) pathway of putrescine biosynthesis, a basic polyamine. This Pseudomonas syringae pv. tomato (strain ATCC BAA-871 / DC3000) protein is Agmatine deiminase.